Consider the following 231-residue polypeptide: Cell cycle transcriptional regulator CtrA (231 aa).

Residues 2-116 form the Response regulatory domain; that stretch reads RVLLIEDDSA…EMIARIHAVV (115 aa). Residue D51 is modified to 4-aspartylphosphate. The segment at residues 124–223 is a DNA-binding region (ompR/PhoB-type); sequence QSVIKTGDIV…VWGRGYVLRD (100 aa).

In terms of processing, phosphorylated by CckA.

Functionally, forms part of a two-component regulatory system CtrA/CckA that controls multiple events in the cell cycle, including cell division, stalk synthesis and cell cycle-specific transcription. Binds to a group of cell cycle-regulated promoters critical for DNA replication, DNA methylation, and class II flagellar biogenesis. The polypeptide is Cell cycle transcriptional regulator CtrA (ctrA) (Caulobacter vibrioides (strain ATCC 19089 / CIP 103742 / CB 15) (Caulobacter crescentus)).